The chain runs to 319 residues: MTDARMRSREQERTDETESESTDGCPECGGLVVNDEEHGESVCADCGLVVEEDGIDRGPEWRAFDSKEKDEKSRVGAPTTNTMHDKGLSTNIDWRDKDAYGNSLSSNQRQKMQRLRKWNERFRTRDAKERNLKQALGEIDRMASALGLPDNVRETASVIYRRALEDDLLPGRSIEGVATSCVYAAARQAGVPRSLDEIADVSRVEKAEIARTYRYVVRELGLEVAPADPESYVPRFASDLGLSDEASHRARELLKTAKDKGVHSGKSPVGLAAAAVYAAALLTNEKTTQAKVSEVADISEVTIRNRYHELLEAEDTIPV.

The span at M1 to E16 shows a compositional bias: basic and acidic residues. A disordered region spans residues M1–V33. A TFIIB-type zinc finger spans residues S21–E51. Zn(2+) contacts are provided by C25, C28, C43, and C46. Residues P59–R74 show a composition bias toward basic and acidic residues. Residues P59–S89 form a disordered region. A run of 2 repeats spans residues G137–L220 and S231–E312.

It belongs to the TFIIB family.

Stabilizes TBP binding to an archaeal box-A promoter. Also responsible for recruiting RNA polymerase II to the pre-initiation complex (DNA-TBP-TFIIB). This is Transcription initiation factor IIB 6 from Halobacterium salinarum (strain ATCC 700922 / JCM 11081 / NRC-1) (Halobacterium halobium).